Here is an 875-residue protein sequence, read N- to C-terminus: MTGKEIRARFLKFFADRGHAVVPSSPLIPHNDPTLLFANAGMNQFKDCFLGLEKRDYVRACSSQKCVRAGGKHNDLENVGRTARHHTFFEMLGNFSFGDYFKKEAIAFAWEFLTKDLGLDKDRLYVTVYTDDDEAADIWHLQEGVPRERIYRFGEKDNFWAMGDTGPCGPCSEIFWDNGPEVGCGSPDCAVGCDCDRYMEIWNNVFMQFNRSADGVLTPLPKPSVDTGMGLERISTVMQGVKSNYDTDLFQGIIGHVEKLSGKRYRHSEKDDVSMRVMADHVRATTFLICDGVLPSNEGRGYVLRRIMRRAARHAKMLGFAEPVICRMVEAVNAMMGDAYPELLEREEYIRKVIRAEEERFAETLDRGLAILNEAVADLKNEGRTVIPGETLFRLYDTFGFPTDLTADIVRSEGFTIDEDGFEACMERQREQAREHWKGSGEEGIAEVHKTLHSRGVRSRFTGYEARTAYSPVTVLLKGGAEVAEATAGDRVEIITDATPFYGESGGQVGDTGTISTGSAHVEVTETLRPFPDLIVHRGTVVEGTIRQGDACDLKVAPGRDATARNHTATHLLQSALRQVLGDHVKQSGSLVGPDRLRFDFTHFAAMTPEEIRRVEEIVNSCIMANDDVHAREMALDEAMEIGATALFGEKYGDTVRVVRVGEVSMELCGGTHVHAAGDIGFFKILSEAGIAAGVRRIEALTGMGALRHVQQLEDERKEIAALIKAEGGDNVERLQRLLTRQKDMQREIETLESRLNAARSADLLADVREVNGVKVLATLAEVDDPKKLRELADTLKDRLGSGVVALGCVKEGKANLLVAVTKDLTGRVKAGDLIRQLSPIIGGSGGGKPELAQAGGTLPDKLGEALGKVCELVP.

4 residues coordinate Zn(2+): His567, His571, Cys669, and His673.

This sequence belongs to the class-II aminoacyl-tRNA synthetase family. It depends on Zn(2+) as a cofactor.

The protein localises to the cytoplasm. It carries out the reaction tRNA(Ala) + L-alanine + ATP = L-alanyl-tRNA(Ala) + AMP + diphosphate. Its function is as follows. Catalyzes the attachment of alanine to tRNA(Ala) in a two-step reaction: alanine is first activated by ATP to form Ala-AMP and then transferred to the acceptor end of tRNA(Ala). Also edits incorrectly charged Ser-tRNA(Ala) and Gly-tRNA(Ala) via its editing domain. This is Alanine--tRNA ligase from Geobacter sulfurreducens (strain ATCC 51573 / DSM 12127 / PCA).